The chain runs to 147 residues: 3-dehydroquinate dehydratase (147 aa).

The Proton acceptor role is filled by tyrosine 23. Substrate contacts are provided by asparagine 74, histidine 80, and aspartate 87. The active-site Proton donor is the histidine 100. Residues 101–102 (IS) and arginine 111 each bind substrate.

Belongs to the type-II 3-dehydroquinase family. Homododecamer.

It catalyses the reaction 3-dehydroquinate = 3-dehydroshikimate + H2O. It functions in the pathway metabolic intermediate biosynthesis; chorismate biosynthesis; chorismate from D-erythrose 4-phosphate and phosphoenolpyruvate: step 3/7. Functionally, catalyzes a trans-dehydration via an enolate intermediate. This chain is 3-dehydroquinate dehydratase, found in Prochlorococcus marinus (strain MIT 9215).